Consider the following 446-residue polypeptide: Cyclin-T1-1 (446 aa).

Belongs to the cyclin family. Cyclin T subfamily.

The polypeptide is Cyclin-T1-1 (CYCT1-1) (Oryza sativa subsp. japonica (Rice)).